We begin with the raw amino-acid sequence, 228 residues long: Urease accessory protein UreF (228 aa).

The protein belongs to the UreF family. UreD, UreF and UreG form a complex that acts as a GTP-hydrolysis-dependent molecular chaperone, activating the urease apoprotein by helping to assemble the nickel containing metallocenter of UreC. The UreE protein probably delivers the nickel.

It localises to the cytoplasm. Required for maturation of urease via the functional incorporation of the urease nickel metallocenter. The polypeptide is Urease accessory protein UreF (Yersinia enterocolitica serotype O:8 / biotype 1B (strain NCTC 13174 / 8081)).